A 476-amino-acid polypeptide reads, in one-letter code: Cysteine--tRNA ligase (476 aa).

Cys31 contacts Zn(2+). A 'HIGH' region motif is present at residues 33–43 (PTVYNYAHIGN). The Zn(2+) site is built by Cys211, His236, and Glu240. A 'KMSKS' region motif is present at residues 269-273 (KMSKS). Residue Lys272 participates in ATP binding.

The protein belongs to the class-I aminoacyl-tRNA synthetase family. As to quaternary structure, monomer. Requires Zn(2+) as cofactor.

It localises to the cytoplasm. The enzyme catalyses tRNA(Cys) + L-cysteine + ATP = L-cysteinyl-tRNA(Cys) + AMP + diphosphate. This Xanthomonas axonopodis pv. citri (strain 306) protein is Cysteine--tRNA ligase.